Consider the following 246-residue polypeptide: Carboxy-S-adenosyl-L-methionine synthase (246 aa).

S-adenosyl-L-methionine is bound by residues Tyr-39, 64-66 (GCS), 89-90 (DN), 121-122 (DI), Asn-136, and Arg-203.

This sequence belongs to the class I-like SAM-binding methyltransferase superfamily. Cx-SAM synthase family. As to quaternary structure, homodimer.

The catalysed reaction is prephenate + S-adenosyl-L-methionine = carboxy-S-adenosyl-L-methionine + 3-phenylpyruvate + H2O. Functionally, catalyzes the conversion of S-adenosyl-L-methionine (SAM) to carboxy-S-adenosyl-L-methionine (Cx-SAM). The polypeptide is Carboxy-S-adenosyl-L-methionine synthase (Pseudomonas aeruginosa (strain UCBPP-PA14)).